Consider the following 1073-residue polypeptide: MPKREDIKKVLLIGSGPITIGQAAEFDFSGSQACRSLKEEGVQVVLVNSNPATIMTDPEMADSVYIEPLDARIIEKIIEKERPDGIIAGIGGQTGLNITSELAEMGVFEKYGVQILGTPVEAIKNTEDRELFKETMLSIGEKVPLSRAVHSLKEAEEVVEELGLPLIIRPAYTLGGAGGGIARTKEELLEITERGLRRSRINQVLIEESVLGWAEVEYEVMRDANDTCIVICNMENIDPMGVHTGESAVVAPSQTLSDEEHQMLRSASIKIIRALKIEGGCNIQYALKEGDYRIVEVNPRVSRSSALASKATGYPIARVTAKIAIGMTLDEIVNSVTKSTPASFEPALDYVITKIPRWPFDKFTTADKTLTTAMKSTGEIMAIGRTIEESLLKAFKSLDIDNQLGIKRWDEPEIKTLLKTPTSERLFVIFHALERGMSIKEIAELTSINPFFISKMKKIVEMEKCIRTEELTPEFLREVKRMGFPDSRLAELTGKTREQISDFRHEEGILATFKMVDTCAAEFEAATPYYYSTYEDTCETNSTDKKKILILGAGPIRIGQGIEFDYCTVHAVTALREEGIETHIINNNPETVSTDFDTSDKLFFEPLTMEYVMNVIERERPDGVLVQFGGQTSVNLALPLKKELKRRTDLNTVILGTDPEDMDLAEDREKFYLLMQELGIPQPEGGYATSQQEAIEVAKRIGFPVLVRPSYVLGGRAMEIVYDEIDLERYMKEAVRVSPEHPILIDDFLEAACEIDVDAVCDQIDVLIGAIMEHIEEAGVHSGDSACVIPPQSLSKEVLDQVRDYTRKIALGLRVKGLINIQMAEKGGKVFVLEANPRSSRTIPFVSKAVGIPLAKIAAKVIAGHSLKDLGYTDEPKPKHVSIKEVLLPFDKLPGADPVLGPEMKSTGEVMGVDYDFGRAYYKAELAADNLLPLTGKVFLSIRNADKPELVEAARKLQAAGLELMGTRGTVNYLAQHGIFMDTVKKVHDGSPNVIDMMRRDEVDLIINTPTSKMSRKDGYRIRRAAVDFKVPYITTIQAAVAAADAIETMKKGQDLTIKSINEYHKEMEQKEE.

Residues 1 to 399 (MPKREDIKKV…SLLKAFKSLD (399 aa)) form a carboxyphosphate synthetic domain region. ATP is bound by residues arginine 129, arginine 169, glycine 175, glycine 176, glutamate 208, valine 210, glutamate 215, glycine 241, valine 242, histidine 243, glutamine 284, and glutamate 296. In terms of domain architecture, ATP-grasp 1 spans 133-325 (KETMLSIGEK…IARVTAKIAI (193 aa)). 3 residues coordinate Mg(2+): glutamine 284, glutamate 296, and asparagine 298. The Mn(2+) site is built by glutamine 284, glutamate 296, and asparagine 298. The interval 400–540 (IDNQLGIKRW…YSTYEDTCET (141 aa)) is oligomerization domain. The interval 541 to 931 (NSTDKKKILI…YKAELAADNL (391 aa)) is carbamoyl phosphate synthetic domain. One can recognise an ATP-grasp 2 domain in the interval 672–863 (YLLMQELGIP…LAKIAAKVIA (192 aa)). ATP is bound by residues arginine 708, aspartate 747, leucine 749, glutamate 754, glycine 779, valine 780, histidine 781, serine 782, glutamine 822, and glutamate 834. 3 residues coordinate Mg(2+): glutamine 822, glutamate 834, and asparagine 836. Mn(2+)-binding residues include glutamine 822, glutamate 834, and asparagine 836. Residues 930–1071 (NLLPLTGKVF…NEYHKEMEQK (142 aa)) enclose the MGS-like domain. Positions 932-1073 (LPLTGKVFLS…YHKEMEQKEE (142 aa)) are allosteric domain.

Belongs to the CarB family. In terms of assembly, composed of two chains; the small (or glutamine) chain promotes the hydrolysis of glutamine to ammonia, which is used by the large (or ammonia) chain to synthesize carbamoyl phosphate. Tetramer of heterodimers (alpha,beta)4. Requires Mg(2+) as cofactor. Mn(2+) is required as a cofactor.

The catalysed reaction is hydrogencarbonate + L-glutamine + 2 ATP + H2O = carbamoyl phosphate + L-glutamate + 2 ADP + phosphate + 2 H(+). It catalyses the reaction hydrogencarbonate + NH4(+) + 2 ATP = carbamoyl phosphate + 2 ADP + phosphate + 2 H(+). It functions in the pathway amino-acid biosynthesis; L-arginine biosynthesis; carbamoyl phosphate from bicarbonate: step 1/1. Its pathway is pyrimidine metabolism; UMP biosynthesis via de novo pathway; (S)-dihydroorotate from bicarbonate: step 1/3. Functionally, large subunit of the glutamine-dependent carbamoyl phosphate synthetase (CPSase). CPSase catalyzes the formation of carbamoyl phosphate from the ammonia moiety of glutamine, carbonate, and phosphate donated by ATP, constituting the first step of 2 biosynthetic pathways, one leading to arginine and/or urea and the other to pyrimidine nucleotides. The large subunit (synthetase) binds the substrates ammonia (free or transferred from glutamine from the small subunit), hydrogencarbonate and ATP and carries out an ATP-coupled ligase reaction, activating hydrogencarbonate by forming carboxy phosphate which reacts with ammonia to form carbamoyl phosphate. This chain is Carbamoyl phosphate synthase large chain, found in Methanosarcina mazei (strain ATCC BAA-159 / DSM 3647 / Goe1 / Go1 / JCM 11833 / OCM 88) (Methanosarcina frisia).